A 299-amino-acid chain; its full sequence is NmrA-like family domain-containing protein 1 (299 aa).

NADP(+) is bound by residues 11–16, 37–41, 58–59, 79–81, K92, K133, and 155–158; these read GATGAQ, RDPGQ, DQ, TNY, and YFEN. The tract at residues 153-189 is interaction with ASS1; that stretch reads PCYFENLLSYFLPQKAPDGRSYLLSLPMGDVPIDGMS.

This sequence belongs to the NmrA-type oxidoreductase family. In terms of assembly, homodimer. Interacts with ASS1. Interaction is enhanced by low NADPH/NADP(+) ratios, which results in inhibition of ASS1 activity.

The protein localises to the cytoplasm. It is found in the perinuclear region. It localises to the nucleus. Functionally, redox sensor protein. Undergoes restructuring and subcellular redistribution in response to changes in intracellular NADPH/NADP(+) levels. At low NADPH concentrations the protein is found mainly as a monomer, and binds argininosuccinate synthase (ASS1), the enzyme involved in nitric oxide synthesis. Association with ASS1 impairs its activity and reduces the production of nitric oxide, which subsecuently prevents apoptosis. Under normal NADPH concentrations, the protein is found as a dimer and hides the binding site for ASS1. The homodimer binds one molecule of NADPH. Has higher affinity for NADPH than for NADP(+). Binding to NADPH is necessary to form a stable dimer. The chain is NmrA-like family domain-containing protein 1 (NMRAL1) from Bos taurus (Bovine).